A 1687-amino-acid polypeptide reads, in one-letter code: Protein TOPAZ1 (1687 aa).

3 disordered regions span residues 1-132 (MRRP…PGFD), 596-632 (LSRSGSEVISNTTEDTQLTSDTQSLTGNKKRDRGNLT), and 938-969 (ASEIRHDPKDANTSLGEVANETSENETLGDFS). Positions 31 to 41 (GAAGGCGPEAG) are enriched in gly residues. The span at 80 to 113 (RRVEGRRGQVSPSDRRGLEAAKEAEFPLQTERHT) shows a compositional bias: basic and acidic residues. Composition is skewed to polar residues over residues 598–622 (RSGSEVISNTTEDTQLTSDTQSLTG) and 948–963 (ANTSLGEVANETSENE).

It localises to the cytoplasm. It is found in the cytosol. In terms of biological role, important for normal spermatogenesis and male fertility. Specifically required for progression to the post-meiotic stages of spermatocyte development. Seems to be necessary for normal expression levels of a number of testis-expressed gene transcripts, although its role in this process is unclear. This Macaca mulatta (Rhesus macaque) protein is Protein TOPAZ1 (TOPAZ1).